The chain runs to 632 residues: tRNA uridine 5-carboxymethylaminomethyl modification enzyme MnmG (632 aa).

Residue 15-20 participates in FAD binding; sequence GAGHAG. Residues 205–231 form a disordered region; it reads PRVDGNTIDYSKTQEEPGDKEPRHFSY. The span at 216–228 shows a compositional bias: basic and acidic residues; sequence KTQEEPGDKEPRH. Position 276 to 290 (276 to 290) interacts with NAD(+); the sequence is GPRYCPSIEDKVVRF.

This sequence belongs to the MnmG family. Homodimer. Heterotetramer of two MnmE and two MnmG subunits. FAD serves as cofactor.

The protein localises to the cytoplasm. Its function is as follows. NAD-binding protein involved in the addition of a carboxymethylaminomethyl (cmnm) group at the wobble position (U34) of certain tRNAs, forming tRNA-cmnm(5)s(2)U34. This Lactobacillus johnsonii (strain CNCM I-12250 / La1 / NCC 533) protein is tRNA uridine 5-carboxymethylaminomethyl modification enzyme MnmG.